Consider the following 334-residue polypeptide: Glyceraldehyde-3-phosphate dehydrogenase 1 (334 aa).

NAD(+) contacts are provided by residues 11–12, Asp33, Arg77, and Ser119; that span reads RI. D-glyceraldehyde 3-phosphate is bound by residues 150 to 152 and Thr181; that span reads SCT. Cys151 functions as the Nucleophile in the catalytic mechanism. Asn182 contacts NAD(+). D-glyceraldehyde 3-phosphate contacts are provided by residues Arg196, 209–210, and Arg232; that span reads TG. Asn314 is a binding site for NAD(+).

Belongs to the glyceraldehyde-3-phosphate dehydrogenase family. In terms of assembly, homotetramer.

Its subcellular location is the cytoplasm. The catalysed reaction is D-glyceraldehyde 3-phosphate + phosphate + NAD(+) = (2R)-3-phospho-glyceroyl phosphate + NADH + H(+). The protein operates within carbohydrate degradation; glycolysis; pyruvate from D-glyceraldehyde 3-phosphate: step 1/5. Functionally, catalyzes the oxidative phosphorylation of glyceraldehyde 3-phosphate (G3P) to 1,3-bisphosphoglycerate (BPG) using the cofactor NAD. The first reaction step involves the formation of a hemiacetal intermediate between G3P and a cysteine residue, and this hemiacetal intermediate is then oxidized to a thioester, with concomitant reduction of NAD to NADH. The reduced NADH is then exchanged with the second NAD, and the thioester is attacked by a nucleophilic inorganic phosphate to produce BPG. The polypeptide is Glyceraldehyde-3-phosphate dehydrogenase 1 (gap1) (Bacillus cereus).